The primary structure comprises 432 residues: Adenylosuccinate synthetase (432 aa).

GTP contacts are provided by residues 13-19 and 41-43; these read GDEGKGK and GHT. Residue aspartate 14 is the Proton acceptor of the active site. The Mg(2+) site is built by aspartate 14 and glycine 41. Residues 14-17, 39-42, threonine 130, arginine 144, glutamine 225, threonine 240, and arginine 304 contribute to the IMP site; these read DEGK and NAGH. Histidine 42 acts as the Proton donor in catalysis. Substrate is bound at residue 300–306; sequence ATTGRRR. Residues arginine 306, 332 to 334, and 415 to 417 each bind GTP; these read KLD and STG.

Belongs to the adenylosuccinate synthetase family. In terms of assembly, homodimer. Mg(2+) is required as a cofactor.

The protein resides in the cytoplasm. It carries out the reaction IMP + L-aspartate + GTP = N(6)-(1,2-dicarboxyethyl)-AMP + GDP + phosphate + 2 H(+). It functions in the pathway purine metabolism; AMP biosynthesis via de novo pathway; AMP from IMP: step 1/2. Plays an important role in the de novo pathway of purine nucleotide biosynthesis. Catalyzes the first committed step in the biosynthesis of AMP from IMP. The protein is Adenylosuccinate synthetase of Cronobacter sakazakii (strain ATCC BAA-894) (Enterobacter sakazakii).